Here is a 221-residue protein sequence, read N- to C-terminus: Probable septum site-determining protein MinC (221 aa).

It belongs to the MinC family. In terms of assembly, interacts with MinD and FtsZ.

Functionally, cell division inhibitor that blocks the formation of polar Z ring septums. Rapidly oscillates between the poles of the cell to destabilize FtsZ filaments that have formed before they mature into polar Z rings. Prevents FtsZ polymerization. This Shewanella woodyi (strain ATCC 51908 / MS32) protein is Probable septum site-determining protein MinC.